A 245-amino-acid chain; its full sequence is Carboxymethylenebutenolidase homolog (245 aa).

Ala-2 carries the N-acetylalanine modification. Active-site residues include Cys-132, Asp-179, and His-212. Residue Ser-223 is modified to Phosphoserine.

It belongs to the dienelactone hydrolase family.

It is found in the cytoplasm. The protein localises to the cytosol. Functionally, cysteine hydrolase. The polypeptide is Carboxymethylenebutenolidase homolog (Cmbl) (Rattus norvegicus (Rat)).